A 184-amino-acid chain; its full sequence is Cysteine proteinase inhibitor 3 (184 aa).

The N-terminal stretch at 1–35 (MLRRRGFCCCSGAPAAAAAALLLLAVAAAAPRAAG) is a signal peptide. One can recognise a Cystatin domain in the interval 48–134 (GMLAAIRREQ…KAVVEFRHVG (87 aa)). The short motif at 90-94 (QVVTG) is the Secondary area of contact element. The segment at 138 to 165 (SQSATAADDNAGQDTADPTVASRNDLHN) is disordered.

Belongs to the cystatin family. Phytocystatin subfamily.

It is found in the secreted. Specific inhibitor of cysteine proteinases. Probably involved in the regulation of endogenous processes and in defense against pests and pathogens. The chain is Cysteine proteinase inhibitor 3 from Oryza sativa subsp. japonica (Rice).